Consider the following 481-residue polypeptide: Protein hedgehog (481 aa).

Residue Cys93 is the site of N-palmitoyl cysteine attachment. Glu157, Glu158, Asp163, Thr193, Glu194, Asp197, and Asp199 together coordinate Ca(2+). Gly265 carries Cholesterol glycine ester lipidation.

This sequence belongs to the hedgehog family. As to quaternary structure, interacts with shf. In terms of processing, the C-terminal part of the hedgehog protein precursor displays an autoproteolysis activity that results in the cleavage of the full-length protein into two parts (N-product and C-product). In addition, the C-terminal part displays a cholesterol transferase activity that results by the covalent attachment of a cholesterol moiety to the C-terminal of the newly generated N-product. The N-product is the active species in both local and long-range signaling, whereas the C-product has no signaling activity. Post-translationally, cholesterylation is required for N-product targeting to lipid rafts and multimerization. N-palmitoylation by Rasp of the hedgehog N-product, within the secretory pathway, is required for the embryonic and larval patterning activities of the hedgehog signal.

Its subcellular location is the nucleus. It localises to the cytoplasm. It is found in the cell membrane. It catalyses the reaction glycyl-L-cysteinyl-[protein] + cholesterol + H(+) = [protein]-C-terminal glycyl cholesterol ester + N-terminal L-cysteinyl-[protein]. In terms of biological role, the C-terminal part of the hedgehog protein precursor displays an autoproteolysis activity that results in the cleavage of the full-length protein into two parts (N-product and C-product). In addition, the C-terminal part displays a cholesterol transferase activity that results by the covalent attachment of a cholesterol moiety to the C-terminal of the newly generated N-product. Once cleaved, the C-product has no signaling activity and diffuses from the cell. Its function is as follows. The dually lipidated hedgehog protein N-product is a morphogen which is essential for a variety of patterning events during development. Establishes the anterior-posterior axis of the embryonic segments and patterns the larval imaginal disks. Binds to the patched (ptc) receptor, which functions in association with smoothened (smo), to activate the transcription of target genes wingless (wg), decapentaplegic (dpp) and ptc. In the absence of hh, ptc represses the constitutive signaling activity of smo through fused (fu). Essential component of a signaling pathway which regulates the Duox-dependent gut immune response to bacterial uracil; required to activate Cad99C-dependent endosome formation, norpA-dependent Ca2+ mobilization and p38 MAPK, which are essential steps in the Duox-dependent production of reactive oxygen species (ROS) in response to intestinal bacterial infection. During photoreceptor differentiation, it up-regulates transcription of Ubr3, which in turn promotes the hh-signaling pathway by mediating the ubiquitination and degradation of cos. The protein is Protein hedgehog of Drosophila persimilis (Fruit fly).